Reading from the N-terminus, the 709-residue chain is Disintegrin and metalloproteinase domain-containing protein 5 (709 aa).

The propeptide occupies 1 to 98; it reads MKTPISSILK…TLSGFIHVIY (98 aa). Residues 1 to 649 lie on the Extracellular side of the membrane; it reads MKTPISSILK…QQNRGIHPKQ (649 aa). Residues 141–334 form the Peptidase M12B domain; it reads RYIKTDIVVD…QDLECLQDLP (194 aa). Cystine bridges form between cysteine 247/cysteine 329, cysteine 289/cysteine 314, cysteine 291/cysteine 296, cysteine 406/cysteine 426, cysteine 585/cysteine 597, cysteine 591/cysteine 603, and cysteine 605/cysteine 614. The region spanning 346–434 is the Disintegrin domain; it reads RRICGNGILE…YCVPDTFARN (89 aa). The EGF-like; calcium-binding domain maps to 581 to 615; that stretch reads DFQQCNTSRDCNDHGVCNNFNHCHCDKGYNPPYCE. The chain crosses the membrane as a helical span at residues 650–670; it reads QLQLILYITLPLIMIISAVFI. The Cytoplasmic portion of the chain corresponds to 671 to 709; that stretch reads KQSKLSRLCGRERSEGTSCITEDSVSNTKMTTNEGSTLH. The interval 690-709 is disordered; that stretch reads ITEDSVSNTKMTTNEGSTLH.

As to quaternary structure, interacts with TEX101. Detected in testis.

The protein resides in the membrane. This is a non catalytic metalloprotease-like protein. May play a role in sperm-egg fusion. The protein is Disintegrin and metalloproteinase domain-containing protein 5 (Adam5) of Rattus norvegicus (Rat).